Reading from the N-terminus, the 320-residue chain is Aminoacyl tRNA synthase complex-interacting multifunctional protein 2 (320 aa).

Phosphoserine is present on Ser36. Residues 82–162 (TPDADLDVTN…HTHSSVKNVP (81 aa)) form an interaction with PRKN region. An interaction with TP53 region spans residues 162 to 225 (PENLVKCFGE…FLFSLFGQKH (64 aa)). The 98-residue stretch at 220 to 317 (LFGQKHNAVT…NLAPFSTALQ (98 aa)) folds into the GST C-terminal domain.

In terms of assembly, part of the multisynthetase complex (MSC), a multisubunit complex that groups tRNA ligases for Arg (RARS1), Asp (DARS1), Gln (QARS1), Ile (IARS1), Leu (LARS1), Lys (KARS1), Met (MARS1) the bifunctional ligase for Glu and Pro (EPRS1) and the auxiliary subunits AIMP1/p43, AIMP2/p38 and EEF1E1/p18. Interacts (via N-terminus) with KARS1. Interacts with EPRS1. Forms a linear complex that contains MARS1, EEF1E1, EPRS1 and AIMP2 that is at the core of the multisubunit complex. Binds FUBP1 (via C-terminus). Interacts in both its unphosphorylated and phosphorylated forms with p53/TP53 (via N-terminus) in the nucleus following UV irradiation. Interacts (via N-terminus) with PRKN/parkin (via first RING-type domain). Interacts with TARS3. In terms of processing, phosphorylated on serine residues in response to UV irradiation. Ubiquitinated by PRKN, leading to its degradation by the proteasome.

It localises to the cytoplasm. The protein resides in the cytosol. It is found in the nucleus. Required for assembly and stability of the aminoacyl-tRNA synthase complex. Mediates ubiquitination and degradation of FUBP1, a transcriptional activator of MYC, leading to MYC down-regulation which is required for aveolar type II cell differentiation. Blocks MDM2-mediated ubiquitination and degradation of p53/TP53. Functions as a proapoptotic factor. In Mus musculus (Mouse), this protein is Aminoacyl tRNA synthase complex-interacting multifunctional protein 2 (Aimp2).